The primary structure comprises 332 residues: Ribosomal RNA small subunit methyltransferase C (332 aa).

Belongs to the methyltransferase superfamily. RsmC family. In terms of assembly, monomer.

Its subcellular location is the cytoplasm. It carries out the reaction guanosine(1207) in 16S rRNA + S-adenosyl-L-methionine = N(2)-methylguanosine(1207) in 16S rRNA + S-adenosyl-L-homocysteine + H(+). Specifically methylates the guanine in position 1207 of 16S rRNA in the 30S particle. This is Ribosomal RNA small subunit methyltransferase C from Pseudomonas aeruginosa (strain UCBPP-PA14).